Here is a 126-residue protein sequence, read N- to C-terminus: Large ribosomal subunit protein eL32 (126 aa).

This sequence belongs to the eukaryotic ribosomal protein eL32 family. In terms of assembly, part of the 50S ribosomal subunit.

The protein is Large ribosomal subunit protein eL32 (rpl32e) of Thermococcus kodakarensis (strain ATCC BAA-918 / JCM 12380 / KOD1) (Pyrococcus kodakaraensis (strain KOD1)).